We begin with the raw amino-acid sequence, 233 residues long: Large ribosomal subunit protein eL6x (233 aa).

Over residues 48–72 the composition is skewed to basic and acidic residues; that stretch reads HDAKSKVDAPVEKPPKFYPAEDVKK. The tract at residues 48 to 80 is disordered; the sequence is HDAKSKVDAPVEKPPKFYPAEDVKKPLPNRRTA.

It belongs to the eukaryotic ribosomal protein eL6 family.

This Arabidopsis thaliana (Mouse-ear cress) protein is Large ribosomal subunit protein eL6x (RPL6C).